Here is a 254-residue protein sequence, read N- to C-terminus: Large ribosomal subunit protein uL4 (254 aa).

Belongs to the universal ribosomal protein uL4 family. As to quaternary structure, part of the 50S ribosomal subunit.

One of the primary rRNA binding proteins, this protein initially binds near the 5'-end of the 23S rRNA. It is important during the early stages of 50S assembly. It makes multiple contacts with different domains of the 23S rRNA in the assembled 50S subunit and ribosome. In terms of biological role, forms part of the polypeptide exit tunnel. The chain is Large ribosomal subunit protein uL4 from Methanothermobacter thermautotrophicus (strain ATCC 29096 / DSM 1053 / JCM 10044 / NBRC 100330 / Delta H) (Methanobacterium thermoautotrophicum).